Reading from the N-terminus, the 417-residue chain is NADH-quinone oxidoreductase subunit D (417 aa).

The protein belongs to the complex I 49 kDa subunit family. NDH-1 is composed of 14 different subunits. Subunits NuoB, C, D, E, F, and G constitute the peripheral sector of the complex.

It localises to the cell inner membrane. It carries out the reaction a quinone + NADH + 5 H(+)(in) = a quinol + NAD(+) + 4 H(+)(out). Its function is as follows. NDH-1 shuttles electrons from NADH, via FMN and iron-sulfur (Fe-S) centers, to quinones in the respiratory chain. The immediate electron acceptor for the enzyme in this species is believed to be ubiquinone. Couples the redox reaction to proton translocation (for every two electrons transferred, four hydrogen ions are translocated across the cytoplasmic membrane), and thus conserves the redox energy in a proton gradient. This chain is NADH-quinone oxidoreductase subunit D, found in Acidithiobacillus ferrooxidans (strain ATCC 53993 / BNL-5-31) (Leptospirillum ferrooxidans (ATCC 53993)).